Here is a 535-residue protein sequence, read N- to C-terminus: Bifunctional purine biosynthesis protein PurH (535 aa).

Residues 6–151 enclose the MGS-like domain; sequence TRLPIRRALI…KNHKDVAIVV (146 aa).

The protein belongs to the PurH family.

The catalysed reaction is (6R)-10-formyltetrahydrofolate + 5-amino-1-(5-phospho-beta-D-ribosyl)imidazole-4-carboxamide = 5-formamido-1-(5-phospho-D-ribosyl)imidazole-4-carboxamide + (6S)-5,6,7,8-tetrahydrofolate. It carries out the reaction IMP + H2O = 5-formamido-1-(5-phospho-D-ribosyl)imidazole-4-carboxamide. Its pathway is purine metabolism; IMP biosynthesis via de novo pathway; 5-formamido-1-(5-phospho-D-ribosyl)imidazole-4-carboxamide from 5-amino-1-(5-phospho-D-ribosyl)imidazole-4-carboxamide (10-formyl THF route): step 1/1. It functions in the pathway purine metabolism; IMP biosynthesis via de novo pathway; IMP from 5-formamido-1-(5-phospho-D-ribosyl)imidazole-4-carboxamide: step 1/1. The sequence is that of Bifunctional purine biosynthesis protein PurH from Pseudomonas aeruginosa (strain LESB58).